Consider the following 61-residue polypeptide: Small ribosomal subunit protein uS14 (61 aa).

Zn(2+) is bound by residues cysteine 24, cysteine 27, cysteine 40, and cysteine 43.

It belongs to the universal ribosomal protein uS14 family. Zinc-binding uS14 subfamily. Part of the 30S ribosomal subunit. Contacts proteins S3 and S10. Zn(2+) is required as a cofactor.

In terms of biological role, binds 16S rRNA, required for the assembly of 30S particles and may also be responsible for determining the conformation of the 16S rRNA at the A site. In Rhodococcus erythropolis (strain PR4 / NBRC 100887), this protein is Small ribosomal subunit protein uS14.